Here is a 1242-residue protein sequence, read N- to C-terminus: DNA-directed RNA polymerase RPB2 homolog (1242 aa).

The segment at Cys-1180–Cys-1201 adopts a C4-type zinc-finger fold.

It belongs to the RNA polymerase beta chain family. In terms of assembly, part of the viral DNA-directed RNA polymerase that consists of 8 polII-like subunits (RPB1, RPB2, RPB3, RPB5, RPB6, RPB7, RPB9, RPB10), a capping enzyme and a termination factor.

Its subcellular location is the host cytoplasm. It is found in the virion. The catalysed reaction is RNA(n) + a ribonucleoside 5'-triphosphate = RNA(n+1) + diphosphate. Functionally, catalytic component of the DNA-directed RNA polymerase (RNAP) that catalyzes the transcription in the cytoplasm of viral DNA into RNA using the four ribonucleoside triphosphates as substrates. Forms the polymerase active center together with RPB1. Part of the core element with the central large cleft, the clamp element that moves to open and close the cleft and the jaws that are thought to grab the incoming DNA template. The protein is DNA-directed RNA polymerase RPB2 homolog of Ornithodoros (relapsing fever ticks).